The following is a 309-amino-acid chain: Protease HtpX homolog (309 aa).

A run of 2 helical transmembrane segments spans residues 15–35 (NAVL…VDVI) and 54–74 (IFPT…VVCI). Position 165 (His-165) interacts with Zn(2+). Residue Glu-166 is part of the active site. Zn(2+) is bound at residue His-169. A run of 2 helical transmembrane segments spans residues 181–201 (VGIL…FFMG) and 213–233 (MILL…QMYL). Glu-238 is a binding site for Zn(2+).

It belongs to the peptidase M48B family. Zn(2+) is required as a cofactor.

Its subcellular location is the cell inner membrane. In Helicobacter acinonychis (strain Sheeba), this protein is Protease HtpX homolog.